Here is a 325-residue protein sequence, read N- to C-terminus: tRNA N6-adenosine threonylcarbamoyltransferase (325 aa).

Positions 110 and 114 each coordinate Fe cation. Substrate contacts are provided by residues 133–137 (MVSGG), Asp-165, Gly-178, and Asn-268. Asp-296 contributes to the Fe cation binding site.

It belongs to the KAE1 / TsaD family. Fe(2+) serves as cofactor.

It localises to the cytoplasm. The catalysed reaction is L-threonylcarbamoyladenylate + adenosine(37) in tRNA = N(6)-L-threonylcarbamoyladenosine(37) in tRNA + AMP + H(+). In terms of biological role, required for the formation of a threonylcarbamoyl group on adenosine at position 37 (t(6)A37) in tRNAs that read codons beginning with adenine. Is involved in the transfer of the threonylcarbamoyl moiety of threonylcarbamoyl-AMP (TC-AMP) to the N6 group of A37, together with TsaE and TsaB. TsaD likely plays a direct catalytic role in this reaction. The sequence is that of tRNA N6-adenosine threonylcarbamoyltransferase from Thermosipho melanesiensis (strain DSM 12029 / CIP 104789 / BI429).